The primary structure comprises 125 residues: Small ribosomal subunit protein uS17 (125 aa).

2 disordered regions span residues 1–21 (MSSSPAQRHTRKTQIGFVSSR) and 101–125 (VAAQVPTKTTASNTPAPAEQPAPQA).

Belongs to the universal ribosomal protein uS17 family. In terms of assembly, part of the 30S ribosomal subunit.

One of the primary rRNA binding proteins, it binds specifically to the 5'-end of 16S ribosomal RNA. The chain is Small ribosomal subunit protein uS17 from Opitutus terrae (strain DSM 11246 / JCM 15787 / PB90-1).